The chain runs to 349 residues: Dipeptide transport ATP-binding protein DppD (349 aa).

Positions 7-258 (LEVKNLHVNF…PQHPYTWGLL (252 aa)) constitute an ABC transporter domain. Residue 43–50 (GESGSGKS) coordinates ATP.

It belongs to the ABC transporter superfamily. The complex is composed of two ATP-binding proteins (DppD and DppF), two transmembrane proteins (DppB and DppC) and a solute-binding protein (DppA).

The protein localises to the cell membrane. The catalysed reaction is a dipeptide(out) + ATP + H2O = a dipeptide(in) + ADP + phosphate + H(+). Its function is as follows. Part of the ABC transporter DppABCDF involved in dipeptide transport. Responsible for energy coupling to the transport system. This chain is Dipeptide transport ATP-binding protein DppD, found in Lactococcus lactis subsp. cremoris (strain MG1363).